The chain runs to 2729 residues: 3-methylorcinaldehyde synthase (2729 aa).

Positions 99-238 (LPAALLIPLA…GTISNLTRQL (140 aa)) are N-terminal acylcarrier protein transacylase domain (SAT). Positions 361–373 (SLASTVDINSGNG) are enriched in polar residues. A disordered region spans residues 361–391 (SLASTVDINSGNGKTRRVKPADAQSSANSTH). Positions 397–828 (DTDIAIVGMS…GSNASAVLVQ (432 aa)) constitute a Ketosynthase family 3 (KS3) domain. Catalysis depends on for beta-ketoacyl synthase activity residues Cys571, His706, and His748. The tract at residues 942–1230 (FGGQVSCFVG…FLEAGTNSSV (289 aa)) is malonyl-CoA:ACP transacylase (MAT) domain. The active-site For acyl/malonyl transferase activity is Ser1029. The interval 1345-1479 (ETILTFHSSD…GTVAFKNPGD (135 aa)) is N-terminal hotdog fold. Residues 1345–1669 (ETILTFHSSD…YVKIARPSME (325 aa)) form the PKS/mFAS DH domain. Residues 1374 to 1665 (KQLLRGHMTL…LGIAYVKIAR (292 aa)) form a product template (PT) domain region. The active-site Proton acceptor; for dehydratase activity is the His1380. Residues 1513–1669 (DEMLGNQSIY…YVKIARPSME (157 aa)) form a C-terminal hotdog fold region. Asp1575 serves as the catalytic Proton donor; for dehydratase activity. The segment covering 1682-1701 (AGGKTTPQTATKPAAAPVVA) has biased composition (low complexity). The tract at residues 1682 to 1726 (AGGKTTPQTATKPAAAPVVADHTPRTTESASTVNGVNLDDRKPEG) is disordered. The span at 1707-1716 (TTESASTVNG) shows a compositional bias: polar residues. The region spanning 1750–1824 (QDMIARVKAV…GLLQCVAGAL (75 aa)) is the Carrier domain. O-(pantetheine 4'-phosphoryl)serine is present on Ser1784. The span at 1835–1868 (TLTASSDSGINSAKSSILSGTSTSTSTGTTDTGS) shows a compositional bias: low complexity. Positions 1835–1874 (TLTASSDSGINSAKSSILSGTSTSTSTGTTDTGSDVGQSM) are disordered. Residues 2086–2254 (EINPLRIMET…GYVDWTEGMT (169 aa)) form a methyltransferase (C-MeT) domain region. The reductase (R) domain stretch occupies residues 2344 to 2599 (ITGGTGGLGA…GWTPADYVAR (256 aa)).

The protein operates within secondary metabolite biosynthesis; terpenoid biosynthesis. Non-reducing polyketide synthase; part of the gene cluster that mediates the biosynthesis of xenovulene A, an unusual meroterpenoid that has potent inhibitory effects on the human gamma-aminobutyrate A (GABAA) benzodiazepine receptor. The first step of xenovulene A biosynthesis is the biosynthesis of 3-methylorcinaldehyde performed by the non-reducing polyketide synthase aspks1. The salicylate hydroxylase asL1 then catalyzes the oxidative dearomatization of 3-methylorcinaldehyde to yield a dearomatized hydroxycyclohexadione. The 2-oxoglutarate-dependent dioxygenase asL3 further catalyzes the oxidative ring expansion to provide the first tropolone metabolite. The cytochrome P450 monooxygenase asR2 allows the synthesis of tropolone hemiacetal. In parallel, a previously unrecognised class of terpene cyclase, asR6, produces alpha-humulene from farnesylpyrophosphate (FPP). The putative Diels-Alderase asR5 probably catalyzes the formation of the tropolone-humulene skeleton by linking humulene and the polyketide moiety. Oxidative-ring contractions catalyzed by asL4 and asL6 then processively remove carbon atoms from the polyketide to yield xenovulene A. The chain is 3-methylorcinaldehyde synthase from Sarocladium schorii (Acremonium strictum (strain IMI 501407)).